Here is a 298-residue protein sequence, read N- to C-terminus: Beta-soluble NSF attachment protein (298 aa).

Belongs to the SNAP family. Interacts with PRKCABP, and disrupts the interaction between GRIA2 and PRKCABP, leading to the internalization of GRIA2. Brain.

It localises to the membrane. In terms of biological role, required for vesicular transport between the endoplasmic reticulum and the Golgi apparatus. The polypeptide is Beta-soluble NSF attachment protein (NAPB) (Bos taurus (Bovine)).